The chain runs to 620 residues: Cell fusion protein cfr1 (620 aa).

A Fibronectin type-III domain is found at 79 to 169 (LPSPPVLKLK…KHITIKTLRM (91 aa)). Residues 167–256 (LRMIDLTGIQ…RLVNVSGFYI (90 aa)) form the BRCT domain. Disordered regions lie at residues 287 to 566 (QPKN…PEKA) and 588 to 620 (KQSS…VNID). Residues 303–314 (APQQTTQQGTQN) are compositionally biased toward polar residues. Residues 315–330 (SANAEPSSSASVPAEA) are compositionally biased toward low complexity. Positions 352 to 375 (SKPNEAPTSSENIKADQPENSTKQ) are enriched in polar residues. Positions 382-392 (MQIKDAEEHSN) are enriched in basic and acidic residues. The span at 393-406 (LESTPAAQQTSEVE) shows a compositional bias: polar residues. Low complexity predominate over residues 424-434 (NVNEENNTPET). The segment covering 445–468 (NTAAESLINQEETTSGEAVTKSTV) has biased composition (polar residues). Acidic residues predominate over residues 472–484 (ANEEEAEPNEIIE). Residues 506–515 (NNANSENANG) are compositionally biased toward polar residues. Basic and acidic residues predominate over residues 517 to 537 (TDEKIIEAPLDTKENSDDDKP).

The protein belongs to the CHS5 family.

The protein resides in the golgi apparatus. Its function is as follows. Required for cell fusion, independently of fus1. Appears to have a role in transporting proteins that are involved in mating. May act as a scaffold to retain cell fusion proteins in the cisternae of the Golgi. Degraded at the onset of mating and this leads to release of cell fusion proteins. This is Cell fusion protein cfr1 (cfr1) from Schizosaccharomyces pombe (strain 972 / ATCC 24843) (Fission yeast).